A 113-amino-acid polypeptide reads, in one-letter code: Nucleoid-associated protein Csac_1593 (113 aa).

This sequence belongs to the YbaB/EbfC family. As to quaternary structure, homodimer.

It is found in the cytoplasm. The protein resides in the nucleoid. Its function is as follows. Binds to DNA and alters its conformation. May be involved in regulation of gene expression, nucleoid organization and DNA protection. The polypeptide is Nucleoid-associated protein Csac_1593 (Caldicellulosiruptor saccharolyticus (strain ATCC 43494 / DSM 8903 / Tp8T 6331)).